We begin with the raw amino-acid sequence, 363 residues long: Glyceraldehyde-3-phosphate dehydrogenase, muscle (363 aa).

Positions 1 to 176 (MVKVGVNGFG…KYDKSLKIVS (176 aa)) are interaction with WARS. An N6,N6-dimethyllysine modification is found at K3. N7 carries the post-translational modification Deamidated asparagine. Residues 11 to 12 (RI) and D33 each bind NAD(+). Y70 carries the phosphotyrosine modification. At K89 the chain carries N6-acetyllysine. Residue N92 is modified to Deamidated asparagine. K94 carries the N6,N6-dimethyllysine modification. The residue at position 98 (N98) is a Deamidated asparagine. Position 103 is a phosphothreonine (T103). NAD(+) contacts are provided by R108 and S150. A phosphoserine mark is found at S150 and S176. Residue N177 is modified to Deamidated asparagine. S179 bears the Phosphoserine mark. Position 179-181 (179-181 (SCT)) interacts with D-glyceraldehyde 3-phosphate. Residue C180 is the Nucleophile of the active site. At C180 the chain carries ADP-ribosylcysteine; by autocatalysis; in irreversibly inhibited form. A Cysteine persulfide modification is found at C180. The residue at position 180 (C180) is an S-(2-succinyl)cysteine. Position 180 is an S-nitrosocysteine; in reversibly inhibited form (C180). T181 carries the phosphothreonine modification. N183 is modified (deamidated asparagine). T205, T210, and T212 each carry phosphothreonine. Residue T210 participates in D-glyceraldehyde 3-phosphate binding. A Glycyl lysine isopeptide (Lys-Gly) (interchain with G-Cter in SUMO2) cross-link involves residue K214. The residue at position 222 (K222) is an N6,N6-dimethyllysine; alternate. An N6-acetyllysine; alternate modification is found at K222. K222 is subject to N6-malonyllysine; alternate. Phosphothreonine is present on T239. Residue 239-240 (TG) coordinates D-glyceraldehyde 3-phosphate. K243 carries the post-translational modification N6,N6-dimethyllysine; alternate. K243 bears the N6-malonyllysine; alternate mark. K247 is modified (N6-acetyllysine). N253 carries the deamidated asparagine modification. Position 255 is an N6,N6-dimethyllysine; alternate (K255). K255 carries the post-translational modification N6-acetyllysine; alternate. T257 bears the Phosphothreonine mark. Residue R262 participates in D-glyceraldehyde 3-phosphate binding. Residue T265 is modified to Phosphothreonine. Position 269 is a phosphoserine (S269). An S-(2-succinyl)cysteine modification is found at C275. C275 bears the S-nitrosocysteine mark. K282 carries the N6-acetyllysine modification. At K291 the chain carries N6,N6-dimethyllysine. At S340 the chain carries Phosphoserine. Residue N344 is modified to Deamidated asparagine. N344 lines the NAD(+) pocket. At S361 the chain carries Phosphoserine. The residue at position 362 (K362) is an N6,N6-dimethyllysine.

Belongs to the glyceraldehyde-3-phosphate dehydrogenase family. Homotetramer. Interacts with TPPP; the interaction is direct. Interacts (when S-nitrosylated) with SIAH1; leading to nuclear translocation. Interacts with RILPL1/GOSPEL, leading to prevent the interaction between GAPDH and SIAH1 and prevent nuclear translocation. Interacts with CHP1; the interaction increases the binding of CHP1 with microtubules. Associates with microtubules. Interacts with EIF1AD, USP25, PRKCI and WARS1. Interacts with phosphorylated RPL13A; inhibited by oxidatively-modified low-densitity lipoprotein (LDL(ox)). Component of the GAIT complex. Interacts with FKBP6; leading to inhibit GAPDH catalytic activity. Interacts with TRAF2, promoting TRAF2 ubiquitination. Interacts with TRAF3, promoting TRAF3 ubiquitination. Post-translationally, ISGylated. S-nitrosylation of Cys-180 leads to interaction with SIAH1, followed by translocation to the nucleus S-nitrosylation of Cys-275 is induced by interferon-gamma and LDL(ox) implicating the iNOS-S100A8/9 transnitrosylase complex and seems to prevent interaction with phosphorylated RPL13A and to interfere with GAIT complex activity. In terms of processing, sulfhydration at Cys-180 increases catalytic activity.

It is found in the cytoplasm. The protein resides in the cytosol. Its subcellular location is the cytoskeleton. The protein localises to the nucleus. It carries out the reaction D-glyceraldehyde 3-phosphate + phosphate + NAD(+) = (2R)-3-phospho-glyceroyl phosphate + NADH + H(+). It catalyses the reaction S-nitroso-L-cysteinyl-[GAPDH] + L-cysteinyl-[protein] = L-cysteinyl-[GAPDH] + S-nitroso-L-cysteinyl-[protein]. Its pathway is carbohydrate degradation; glycolysis; pyruvate from D-glyceraldehyde 3-phosphate: step 1/5. Glyceraldehyde-3-phosphate dehydrogenase activity is inhibited by fumarate, via the formation of S-(2-succinyl)cysteine residues. In terms of biological role, has both glyceraldehyde-3-phosphate dehydrogenase and nitrosylase activities, thereby playing a role in glycolysis and nuclear functions, respectively. Glyceraldehyde-3-phosphate dehydrogenase is a key enzyme in glycolysis that catalyzes the first step of the pathway by converting D-glyceraldehyde 3-phosphate (G3P) into 3-phospho-D-glyceroyl phosphate. Modulates the organization and assembly of the cytoskeleton. Facilitates the CHP1-dependent microtubule and membrane associations through its ability to stimulate the binding of CHP1 to microtubules. Component of the GAIT (gamma interferon-activated inhibitor of translation) complex which mediates interferon-gamma-induced transcript-selective translation inhibition in inflammation processes. Upon interferon-gamma treatment assembles into the GAIT complex which binds to stem loop-containing GAIT elements in the 3'-UTR of diverse inflammatory mRNAs (such as ceruplasmin) and suppresses their translation. Also plays a role in innate immunity by promoting TNF-induced NF-kappa-B activation and type I interferon production, via interaction with TRAF2 and TRAF3, respectively. Participates in nuclear events including transcription, RNA transport, DNA replication and apoptosis. Nuclear functions are probably due to the nitrosylase activity that mediates cysteine S-nitrosylation of nuclear target proteins such as SIRT1, HDAC2 and PRKDC. This chain is Glyceraldehyde-3-phosphate dehydrogenase, muscle, found in Jaculus orientalis (Greater Egyptian jerboa).